The primary structure comprises 382 residues: uncharacterized protein (382 aa).

Positions 1 to 92 (MQFLSVIPEQ…GATAYRNTEF (92 aa)) constitute a PE domain. 8 consecutive transmembrane segments (helical) span residues 23–43 (SALS…VSAA), 155–175 (AAVA…NGVV), 203–223 (FIVA…AVVG), 230–250 (TFLT…LAGV), 261–281 (LASG…VQLF), 284–304 (AFLL…IAVV), 315–335 (LVVP…AQFA), and 347–367 (LGAP…QGIG).

The protein belongs to the mycobacterial PE family.

The protein resides in the cell membrane. This is an uncharacterized protein from Mycobacterium bovis (strain ATCC BAA-935 / AF2122/97).